The following is a 570-amino-acid chain: Protein NRT1/ PTR FAMILY 8.2 (570 aa).

Thr99 carries the phosphothreonine modification. The next 10 membrane-spanning stretches (helical) occupy residues 100–120 (IASF…SASV), 136–156 (AGQT…TGGI), 182–202 (FFNW…SVLV), 210–230 (WGWG…FFFA), 335–355 (IWAT…VFVL), 370–390 (IPSA…APVY), 414–434 (IGIG…LEVA), 454–474 (IFWQ…TFIG), 493–513 (ALSL…VTLV), and 537–557 (YFFW…LWIA).

This sequence belongs to the major facilitator superfamily. Proton-dependent oligopeptide transporter (POT/PTR) (TC 2.A.17) family. Expressed in developing and germinating pollen grains and ovules.

It is found in the cell membrane. Peptide transporter. Mediates the transport of di- and tripeptides. High affinity transporter. Involved in the uptake of peptides during pollen germination and tube growth. The protein is Protein NRT1/ PTR FAMILY 8.2 (NPF8.2) of Arabidopsis thaliana (Mouse-ear cress).